Consider the following 294-residue polypeptide: MMRILLFILTNLSVMIIFGIILFITGIKSSSSFGLIIMSGVFGFGGSIISLLLSKYIAINSVNAKIIKNPKNDIENWLFNTIKLQSQKANIGTPDIAIYDAEDINAFATGPKKNSALIAVSTGLLNNMSKKEAEAVLAHEISHISNGDMITMTLIQGVVNTFVIFLSRVISKFIVNLFSTNKEDENSYESENSWSYFFISMALEVVFGILASIITFWFSRKREFYADAGSAEIVGKNNMIAALQKIKNTCEPNVGKELLAFCINGKKSFNEIFMSHPPIDKRIQALIQEKYMKK.

Helical transmembrane passes span 4–24 (ILLF…ILFI) and 33–53 (FGLI…SLLL). Histidine 139 lines the Zn(2+) pocket. Glutamate 140 is a catalytic residue. Position 143 (histidine 143) interacts with Zn(2+). A run of 2 helical transmembrane segments spans residues 147-167 (GDMI…IFLS) and 197-217 (FFIS…ITFW). Zn(2+) is bound at residue glutamate 223.

This sequence belongs to the peptidase M48B family. Zn(2+) is required as a cofactor.

It localises to the cell membrane. The protein is Protease HtpX of Wigglesworthia glossinidia brevipalpis.